A 253-amino-acid chain; its full sequence is uncharacterized protein (253 aa).

Positions 1–15 are cleaved as a signal peptide; sequence MNRVILFHFHFFKNA.

This is an uncharacterized protein from Archaeoglobus fulgidus (strain ATCC 49558 / DSM 4304 / JCM 9628 / NBRC 100126 / VC-16).